The primary structure comprises 67 residues: DNA-directed RNA polymerases I, II, and III subunit RPABC5 (67 aa).

4 residues coordinate Zn(2+): Cys7, Cys10, Cys44, and Cys45.

This sequence belongs to the archaeal Rpo10/eukaryotic RPB10 RNA polymerase subunit family. In terms of assembly, component of the RNA polymerase I (Pol I), RNA polymerase II (Pol II) and RNA polymerase III (Pol III) complexes consisting of at least 13, 12 and 17 subunits, respectively.

Its subcellular location is the nucleus. Its function is as follows. DNA-dependent RNA polymerase catalyzes the transcription of DNA into RNA using the four ribonucleoside triphosphates as substrates. Common component of RNA polymerases I, II and III which synthesize ribosomal RNA precursors, mRNA precursors and many functional non-coding RNAs, and a small RNAs, such as 5S rRNA and tRNAs, respectively. Pol II is the central component of the basal RNA polymerase II transcription machinery. Pols are composed of mobile elements that move relative to each other. In Pol II, Polr2L is part of the core element with the central large cleft. In Drosophila melanogaster (Fruit fly), this protein is DNA-directed RNA polymerases I, II, and III subunit RPABC5.